The chain runs to 353 residues: Fe(3+) ions import ATP-binding protein FbpC (353 aa).

The ABC transporter domain occupies 9–239 (VTFENVTKKF…PASAFIADFM (231 aa)). Position 41 to 48 (41 to 48 (GPSGCGKT)) interacts with ATP.

Belongs to the ABC transporter superfamily. Fe(3+) ion importer (TC 3.A.1.10) family. The complex is composed of two ATP-binding proteins (FbpC), two transmembrane proteins (FbpB) and a solute-binding protein (FbpA).

The protein resides in the cell inner membrane. The enzyme catalyses Fe(3+)(out) + ATP + H2O = Fe(3+)(in) + ADP + phosphate + H(+). Its function is as follows. Part of the ABC transporter complex FbpABC involved in Fe(3+) ions import. Responsible for energy coupling to the transport system. In Brucella suis biovar 1 (strain 1330), this protein is Fe(3+) ions import ATP-binding protein FbpC.